A 704-amino-acid chain; its full sequence is Elongation factor G (704 aa).

The tr-type G domain maps to 9–285 (AKVRNIGIMA…AIVAYLPSPL (277 aa)). GTP-binding positions include 18–25 (AHIDAGKT), 82–86 (DTPGH), and 136–139 (NKMD).

Belongs to the TRAFAC class translation factor GTPase superfamily. Classic translation factor GTPase family. EF-G/EF-2 subfamily.

Its subcellular location is the cytoplasm. Catalyzes the GTP-dependent ribosomal translocation step during translation elongation. During this step, the ribosome changes from the pre-translocational (PRE) to the post-translocational (POST) state as the newly formed A-site-bound peptidyl-tRNA and P-site-bound deacylated tRNA move to the P and E sites, respectively. Catalyzes the coordinated movement of the two tRNA molecules, the mRNA and conformational changes in the ribosome. The chain is Elongation factor G from Thermobifida fusca (strain YX).